We begin with the raw amino-acid sequence, 1883 residues long: AF4/FMR2 family member lilli (1883 aa).

A compositionally biased stretch (low complexity) spans 1–45 (MAQQQQQQHLQQQQQQHHQQQQLQQLQQQQQLPQYNNNLYNLNYN). 17 disordered regions span residues 1–88 (MAQQ…SEGD), 140–311 (INST…EKDI), 329–381 (SIAA…SCTT), 449–540 (MPTP…HHQH), 609–654 (LGGG…HLSR), 796–827 (SISS…TLQI), 844–901 (MQQK…KKHA), 922–962 (TAAA…LAKG), 992–1018 (VAGS…LHAA), 1039–1075 (TAAA…ATAT), 1115–1145 (KNNR…QHKQ), 1170–1238 (QHQQ…KSDK), 1358–1413 (YAAE…GART), 1450–1510 (EHGV…DQVS), 1543–1583 (ANGS…KATT), 1595–1641 (QTST…PPSD), and 1783–1803 (PSNS…RIVP). The span at 57–80 (REKYERQQGIQSDDRETSLFEAPR) shows a compositional bias: basic and acidic residues. Low complexity-rich tracts occupy residues 140-154 (INST…SLLP), 161-178 (QQQQ…QQQQ), 223-253 (SASS…ASTA), and 362-381 (PLNS…SCTT). A compositionally biased stretch (pro residues) spans 450-462 (PTPPKASPTPPTA). Residue threonine 458 is modified to Phosphothreonine. Positions 466-479 (LKSEKNHSLEKQDS) are enriched in basic and acidic residues. The span at 481-491 (LENDLELSESD) shows a compositional bias: acidic residues. A phosphoserine mark is found at serine 488 and serine 490. Residues 500 to 540 (SAGNSSNSSETDSSESGSEASSKGEAQQQQQQQQQLLHHQH) are compositionally biased toward low complexity. A compositionally biased stretch (gly residues) spans 609 to 625 (LGGGGGSGSTGGGGGSS). Composition is skewed to low complexity over residues 626-639 (SSGM…SSSN) and 796-813 (SISS…SAAG). The span at 867–877 (PRQKKPRKKKM) shows a compositional bias: basic residues. A phosphoserine mark is found at serine 887 and serine 888. Residues 930 to 942 (KKGRGRPRKQQQQ) constitute a DNA-binding region (a.T hook). The span at 939–962 (QQQQLQQTQSGNLSSASAGSLAKG) shows a compositional bias: low complexity. A phosphoserine mark is found at serine 953 and serine 955. Composition is skewed to low complexity over residues 1124-1145 (SSSN…QHKQ), 1170-1186 (QHQQ…QQQQ), 1200-1222 (SSSS…SSSS), 1362-1376 (QQQQ…QQLH), and 1385-1399 (HYQQ…KAQQ). Residues 1450 to 1467 (EHGVKPEPELDAGYEAKY) are compositionally biased toward basic and acidic residues. Position 1546 is a phosphoserine (serine 1546). Threonine 1548 bears the Phosphothreonine mark. 2 stretches are compositionally biased toward low complexity: residues 1558 to 1583 (QQQQ…KATT) and 1595 to 1606 (QTSTTATQQPTT). Residues 1614–1625 (TPPPVAPPPPPR) show a composition bias toward pro residues. Positions 1783–1794 (PSNSVGSQGSGS) are enriched in low complexity.

It belongs to the AF4 family.

Its subcellular location is the nucleus. Its function is as follows. Has a role in transcriptional regulation. Acts in parallel with the Ras/MAPK and the PI3K/PKB pathways in the control of cell identity and cellular growth. Essential for regulation of the cytoskeleton and cell growth but not for cell proliferation or growth rate. Required specifically for the microtubule-based basal transport of lipid droplets. Plays a partially redundant function downstream of Raf in cell fate specification in the developing eye. Pair-rule protein that regulates embryonic cellularization, gastrulation and segmentation. In Drosophila grimshawi (Hawaiian fruit fly), this protein is AF4/FMR2 family member lilli.